Here is a 513-residue protein sequence, read N- to C-terminus: MALIRKRRAAPQDIYPACKVSNTCPADILNKMEQNTLADKILKYGSAGVFLGGLGISTGKGVGGRTGYIPLGGTESGVGVGTRVTTIRPTVPISSVGSPDFIPVDAVDPLGPAVIPPERFPIAVEDPFTLPPPRFPTAVEEDVIELQPIPGPSSEIPLAGPKITTDAQPAILEVIPETRPPKVITRHQYSNPAFEVSITSNSGAGESSASDHVLVEGFSGGHSIGEHIPLQDLAPSRPSFSETIEDETAFSSSTPKQGSRSERPKSYYNRRRYQQVQVTDPVFISRPRSLVTFDNPAFDESVDLIFERDVAEITAAPHADFTDITKLTKPAYHRGPSGHVRVSRLGHRANIKTRSGLTIGPQSHFYYDVSSIDPAESFELQALGNVSSAEQTGEAVISSGTGDFEIISLEDSILESYNDEDLIDVFEDVARDLHLLVGERRQQPIQVQRYIKPFSFVNEGVHIIHPGSESDFWLPPVTPDSTPAIVIDILDSSADYYLHPSLIKKRKRKHFFF.

The Nuclear localization signal signature appears at 1 to 9; it reads MALIRKRRA. Residues Cys18 and Cys24 are joined by a disulfide bond. A disordered region spans residues 229–269; that stretch reads PLQDLAPSRPSFSETIEDETAFSSSTPKQGSRSERPKSYYN. The segment covering 249–258 has biased composition (polar residues); the sequence is AFSSSTPKQG. A Nuclear localization signal motif is present at residues 504-509; it reads KKRKRK.

The protein belongs to the papillomaviridae L2 protein family. Interacts with major capsid protein L1. Interacts with E2; this interaction inhibits E2 transcriptional activity but not the DNA replication function E2. Interacts with host GADD45GIP1. Interacts with host HSPA8; this interaction is required for L2 nuclear translocation. Interacts with host importins KPNB2 and KPNB3. Forms a complex with importin alpha2-beta1 heterodimers via interaction with the importin alpha2 adapter. Interacts with host DYNLT1; this interaction is essential for virus intracellular transport during entry. Interacts (via C-terminus) with host retromer subunits VPS35 and VPS29. In terms of processing, highly phosphorylated.

The protein resides in the virion. It is found in the host nucleus. The protein localises to the host early endosome. It localises to the host Golgi apparatus. Its function is as follows. Minor protein of the capsid that localizes along the inner surface of the virion, within the central cavities beneath the L1 pentamers. Plays a role in capsid stabilization through interaction with the major capsid protein L1. Once the virion enters the host cell, L2 escorts the genomic DNA into the nucleus by promoting escape from the endosomal compartments and traffic through the host Golgi network. Mechanistically, the C-terminus of L2 possesses a cell-penetrating peptide that protudes from the host endosome, interacts with host cytoplasmic retromer cargo and thereby mediates the capsid delivery to the host trans-Golgi network. Plays a role through its interaction with host dynein in the intracellular microtubule-dependent transport of viral capsid toward the nucleus. Mediates the viral genome import into the nucleus through binding to host importins. Once within the nucleus, L2 localizes viral genomes to host PML bodies in order to activate early gene expression for establishment of infection. Later on, promotes late gene expression by interacting with the viral E2 protein and by inhibiting its transcriptional activation functions. During virion assembly, encapsidates the genome by direct interaction with the viral DNA. The protein is Minor capsid protein L2 of Canine oral papillomavirus (strain Y62) (COPV).